A 188-amino-acid chain; its full sequence is NADH-quinone oxidoreductase subunit I (188 aa).

4Fe-4S ferredoxin-type domains lie at 44–74 (LNRY…VEGA) and 90–119 (QVYQ…MTNE). Positions 54, 57, 60, 64, 99, 102, 105, and 109 each coordinate [4Fe-4S] cluster. The interval 167-188 (TGGAAAAAQDESEVDDTAGDRP) is disordered. Residues 176–188 (DESEVDDTAGDRP) are compositionally biased toward acidic residues.

It belongs to the complex I 23 kDa subunit family. NDH-1 is composed of 14 different subunits. Subunits NuoA, H, J, K, L, M, N constitute the membrane sector of the complex. [4Fe-4S] cluster is required as a cofactor.

The protein localises to the cell membrane. The catalysed reaction is a quinone + NADH + 5 H(+)(in) = a quinol + NAD(+) + 4 H(+)(out). Functionally, NDH-1 shuttles electrons from NADH, via FMN and iron-sulfur (Fe-S) centers, to quinones in the respiratory chain. The immediate electron acceptor for the enzyme in this species is believed to be ubiquinone. Couples the redox reaction to proton translocation (for every two electrons transferred, four hydrogen ions are translocated across the cytoplasmic membrane), and thus conserves the redox energy in a proton gradient. This chain is NADH-quinone oxidoreductase subunit I, found in Rhodococcus jostii (strain RHA1).